The sequence spans 364 residues: Chorismate synthase (364 aa).

Residues 41-60 (MQHDLDRRRPGTSRYTTARR) are disordered. Arginine 48 and arginine 54 together coordinate NADP(+). Residues 125–127 (RSS), 238–239 (NA), glycine 278, 293–297 (KPTSS), and arginine 319 each bind FMN.

Belongs to the chorismate synthase family. In terms of assembly, homotetramer. It depends on FMNH2 as a cofactor.

It catalyses the reaction 5-O-(1-carboxyvinyl)-3-phosphoshikimate = chorismate + phosphate. Its pathway is metabolic intermediate biosynthesis; chorismate biosynthesis; chorismate from D-erythrose 4-phosphate and phosphoenolpyruvate: step 7/7. Functionally, catalyzes the anti-1,4-elimination of the C-3 phosphate and the C-6 proR hydrogen from 5-enolpyruvylshikimate-3-phosphate (EPSP) to yield chorismate, which is the branch point compound that serves as the starting substrate for the three terminal pathways of aromatic amino acid biosynthesis. This reaction introduces a second double bond into the aromatic ring system. In Shewanella sp. (strain ANA-3), this protein is Chorismate synthase.